The chain runs to 379 residues: Presenilin-associated rhomboid-like protein, mitochondrial (379 aa).

Residues methionine 1–glycine 52 constitute a mitochondrion transit peptide. Topologically, residues phenylalanine 53–proline 101 are mitochondrial matrix. Residue serine 65 is modified to Phosphoserine. Threonine 69 bears the Phosphothreonine mark. A Phosphoserine modification is found at serine 70. Residues leucine 102–tyrosine 121 form a helical membrane-spanning segment. Over glutamate 122 to arginine 167 the chain is Mitochondrial intermembrane. A helical membrane pass occupies residues threonine 168–serine 187. The Mitochondrial matrix segment spans residues leucine 188–serine 207. The chain crosses the membrane as a helical span at residues proline 208–tryptophan 230. At serine 231–glutamine 244 the chain is on the mitochondrial intermembrane side. Residues phenylalanine 245–valine 262 form a helical membrane-spanning segment. The Mitochondrial matrix portion of the chain corresponds to glycine 263–proline 272. Residues serine 273–threonine 289 form a helical membrane-spanning segment. The active-site Nucleophile is the serine 277. The Mitochondrial intermembrane portion of the chain corresponds to lysine 290–arginine 295. The helical transmembrane segment at leucine 296–methionine 318 threads the bilayer. Residues aspartate 319–histidine 332 are Mitochondrial matrix-facing. A helical membrane pass occupies residues alanine 333–tryptophan 354. Histidine 335 is a catalytic residue. Residues lysine 355–lysine 379 are Mitochondrial intermembrane-facing.

It belongs to the peptidase S54 family. In terms of assembly, interacts with PSEN1 and PSEN2. Binds OPA1. Post-translationally, P-beta is proteolytically processed (beta-cleavage) in a PARL-dependent manner. The cleavage is inhibited when residues Ser-65, Thr-69 and Ser-70 are all phosphorylated.

Its subcellular location is the mitochondrion inner membrane. It localises to the nucleus. It carries out the reaction Cleaves type-1 transmembrane domains using a catalytic dyad composed of serine and histidine that are contributed by different transmembrane domains.. Required for the control of apoptosis during postnatal growth. Essential for proteolytic processing of an antiapoptotic form of OPA1 which prevents the release of mitochondrial cytochrome c in response to intrinsic apoptotic signals. Required for the maturation of PINK1 into its 52kDa mature form after its cleavage by mitochondrial-processing peptidase (MPP). Promotes cleavage of serine/threonine-protein phosphatase PGAM5 in damaged mitochondria in response to loss of mitochondrial membrane potential. Mediates differential cleavage of PINK1 and PGAM5 depending on the health status of mitochondria, disassociating from PINK1 and associating with PGAM5 in response to mitochondrial membrane potential loss. Required for processing of CLPB into a form with higher protein disaggregase activity by removing an autoinhibitory N-terminal peptide. Promotes processing of DIABLO/SMAC in the mitochondrion which is required for DIABLO apoptotic activity. Also required for cleavage of STARD7 and TTC19. Promotes changes in mitochondria morphology regulated by phosphorylation of P-beta domain. The polypeptide is Presenilin-associated rhomboid-like protein, mitochondrial (PARL) (Homo sapiens (Human)).